The following is a 398-amino-acid chain: Ribosomal RNA small subunit methyltransferase B (398 aa).

S-adenosyl-L-methionine-binding positions include 221–227 (CGGAGLK), Asp242, Asp268, and Asp283. The active-site Nucleophile is Cys336.

It belongs to the class I-like SAM-binding methyltransferase superfamily. RsmB/NOP family.

Its subcellular location is the cytoplasm. The enzyme catalyses cytidine(967) in 16S rRNA + S-adenosyl-L-methionine = 5-methylcytidine(967) in 16S rRNA + S-adenosyl-L-homocysteine + H(+). Its function is as follows. Specifically methylates the cytosine at position 967 (m5C967) of 16S rRNA. The chain is Ribosomal RNA small subunit methyltransferase B from Thermus thermophilus (strain ATCC 27634 / DSM 579 / HB8).